A 126-amino-acid polypeptide reads, in one-letter code: Large ribosomal subunit protein mL55 (126 aa).

Residues 1-34 constitute a mitochondrion transit peptide; sequence MSAKGSLLRLLWQCGMTRAAPESCRYLYTSSWRA. Serine 86 carries the phosphoserine modification.

This sequence belongs to the mitochondrion-specific ribosomal protein mL55 family. In terms of assembly, component of the mitochondrial ribosome large subunit (39S) which comprises a 16S rRNA and about 50 distinct proteins.

The protein resides in the mitochondrion. The protein is Large ribosomal subunit protein mL55 (MRPL55) of Bos taurus (Bovine).